The sequence spans 272 residues: Shikimate dehydrogenase (NADP(+)) (272 aa).

Shikimate contacts are provided by residues 14–16 (SKS) and Thr-61. The active-site Proton acceptor is Lys-65. Position 77 (Glu-77) interacts with NADP(+). The shikimate site is built by Asn-86 and Asp-102. NADP(+) contacts are provided by residues 126 to 130 (GAGGA), 149 to 154 (NRTASR), and Met-213. A shikimate-binding site is contributed by Tyr-215. Gly-237 is a binding site for NADP(+).

This sequence belongs to the shikimate dehydrogenase family. Homodimer.

The catalysed reaction is shikimate + NADP(+) = 3-dehydroshikimate + NADPH + H(+). The protein operates within metabolic intermediate biosynthesis; chorismate biosynthesis; chorismate from D-erythrose 4-phosphate and phosphoenolpyruvate: step 4/7. In terms of biological role, involved in the biosynthesis of the chorismate, which leads to the biosynthesis of aromatic amino acids. Catalyzes the reversible NADPH linked reduction of 3-dehydroshikimate (DHSA) to yield shikimate (SA). This is Shikimate dehydrogenase (NADP(+)) from Citrobacter koseri (strain ATCC BAA-895 / CDC 4225-83 / SGSC4696).